The following is a 419-amino-acid chain: Nodulation protein NoeE (419 aa).

Required for the formation of sulfated nod factor. Proposed to transfer activated sulfate (PAPS) to the fucose of the nod factor. This Sinorhizobium fredii (strain NBRC 101917 / NGR234) protein is Nodulation protein NoeE (noeE).